Consider the following 373-residue polypeptide: uncharacterized protein (373 aa).

Residues 180–202 (YYVVALGTLALGSILGYTAKYVW) traverse the membrane as a helical segment.

It localises to the membrane. This is an uncharacterized protein from Rickettsia prowazekii (strain Madrid E).